Reading from the N-terminus, the 497-residue chain is Aldehyde dehydrogenase (497 aa).

241–246 (GSTLVG) lines the NAD(+) pocket. E264 acts as the Proton acceptor in catalysis. Catalysis depends on C298, which acts as the Nucleophile.

The protein belongs to the aldehyde dehydrogenase family.

The enzyme catalyses an aldehyde + NAD(+) + H2O = a carboxylate + NADH + 2 H(+). Its pathway is alcohol metabolism; ethanol degradation; acetate from ethanol: step 2/2. This Emericella nidulans (strain FGSC A4 / ATCC 38163 / CBS 112.46 / NRRL 194 / M139) (Aspergillus nidulans) protein is Aldehyde dehydrogenase (aldA).